Consider the following 455-residue polypeptide: SH3 domain-binding protein 5 (455 aa).

Residues 1–12 show a composition bias toward basic and acidic residues; the sequence is MDAALKRSRSEE. Residues 1–63 form a disordered region; sequence MDAALKRSRS…QSTDDINRRE (63 aa). The segment covering 22 to 41 has biased composition (acidic residues); the sequence is DEEEEEEEGMEQGLEEEEEV. A sufficient for interaction with RAB11A and for guanine nucleotide exchange activity region spans residues 31–265; it reads MEQGLEEEEE…EIHERRRSSA (235 aa). A compositionally biased stretch (basic and acidic residues) spans 42 to 51; sequence DPRIQGELEK. 4 coiled-coil regions span residues 44–90, 97–145, 154–200, and 211–255; these read RIQG…LVKK, DSKP…RLLE, AWQE…LEKK, and YFEL…MISD. Disordered regions lie at residues 259 to 293 and 306 to 345; these read ERRRSSAMGPRGCGVGAEGSSTSVEDLPGSKPEPD and SCSNFVSEDDSETQSVSSFSSGPTSPSEMPDQFPAVVRPG. Acidic residues predominate over residues 306-317; that stretch reads SCSNFVSEDDSE. Residues 320–332 show a composition bias toward low complexity; it reads SVSSFSSGPTSPS. The residue at position 351 (Ser-351) is a Phosphoserine; by MAPK12 and MAPK9. Residues 369-435 form a disordered region; the sequence is SECSGASSPE…ALENRMKQLS (67 aa). 2 positions are modified to phosphoserine: Ser-375 and Ser-376. A compositionally biased stretch (basic and acidic residues) spans 380–396; that stretch reads EVERGDRAEGAENKTSD. The segment covering 403–421 has biased composition (low complexity); sequence GLSSSSGSGGSSKSQSSTS. Phosphoserine is present on residues Ser-418 and Ser-421.

The protein belongs to the SH3BP5 family. Interacts with BTK. Interacts with all isoforms of MAPK8, MAPK9, MAPK10 and MAPK12. Interacts with GDP-bound and nucleotide-free forms of RAB11A. In terms of tissue distribution, highly expressed in testis and ovaries. It is also expressed in a variety of tissues including spleen, lymph node, thymus, bone marrow, fetal liver, colon, small intestine and prostate.

Its subcellular location is the cytoplasmic vesicle membrane. The protein localises to the mitochondrion. Its function is as follows. Functions as a guanine nucleotide exchange factor (GEF) with specificity for RAB11A and RAB25. Inhibits the auto- and transphosphorylation activity of BTK. Plays a negative regulatory role in BTK-related cytoplasmic signaling in B-cells. May be involved in BCR-induced apoptotic cell death. In Homo sapiens (Human), this protein is SH3 domain-binding protein 5 (SH3BP5).